We begin with the raw amino-acid sequence, 226 residues long: N-(5'-phosphoribosyl)anthranilate isomerase (226 aa).

Belongs to the TrpF family.

The catalysed reaction is N-(5-phospho-beta-D-ribosyl)anthranilate = 1-(2-carboxyphenylamino)-1-deoxy-D-ribulose 5-phosphate. Its pathway is amino-acid biosynthesis; L-tryptophan biosynthesis; L-tryptophan from chorismate: step 3/5. This is N-(5'-phosphoribosyl)anthranilate isomerase (trpF) from Methanothermobacter marburgensis (strain ATCC BAA-927 / DSM 2133 / JCM 14651 / NBRC 100331 / OCM 82 / Marburg) (Methanobacterium thermoautotrophicum).